We begin with the raw amino-acid sequence, 473 residues long: Flagellum-specific ATP synthase (473 aa).

ATP is bound at residue Ala187–Ser194.

Belongs to the ATPase alpha/beta chains family.

Its subcellular location is the cytoplasm. The catalysed reaction is ATP + H2O + 4 H(+)(in) = ADP + phosphate + 5 H(+)(out). Its function is as follows. Probable catalytic subunit of a protein translocase for flagellum-specific export, or a proton translocase involved in local circuits at the flagellum. This Agrobacterium fabrum (strain C58 / ATCC 33970) (Agrobacterium tumefaciens (strain C58)) protein is Flagellum-specific ATP synthase (fliI).